Here is a 346-residue protein sequence, read N- to C-terminus: Phosphate-binding protein PstS (346 aa).

A signal peptide spans 1–25 (MKVMRTTVATVVAATLSMSAFSVFA). Residues 34–36 (ATF), Ser63, Asp81, and 164–166 (SGT) contribute to the phosphate site.

The protein belongs to the PstS family. In terms of assembly, the complex is composed of two ATP-binding proteins (PstB), two transmembrane proteins (PstC and PstA) and a solute-binding protein (PstS).

The protein resides in the periplasm. In terms of biological role, part of the ABC transporter complex PstSACB involved in phosphate import. This is Phosphate-binding protein PstS (pstS) from Escherichia coli (strain K12).